The chain runs to 256 residues: Trypsin, alkaline B (256 aa).

Positions 1–17 (MRLFLALLALGFAAVAA) are cleaved as a signal peptide. Positions 18–24 (VPANPQR) are cleaved as a propeptide — activation peptide. The 232-residue stretch at 25–256 (IVGGSTTTIQ…RFANWIRNNS (232 aa)) folds into the Peptidase S1 domain. Cys55 and Cys71 are oxidised to a cystine. Residues His70 and Asp115 each act as charge relay system in the active site. Disulfide bonds link Cys180–Cys197 and Cys209–Cys233. The active-site Charge relay system is the Ser213.

The protein belongs to the peptidase S1 family. As to expression, midgut.

It localises to the secreted. Its subcellular location is the extracellular space. The catalysed reaction is Preferential cleavage: Arg-|-Xaa, Lys-|-Xaa.. The sequence is that of Trypsin, alkaline B from Manduca sexta (Tobacco hawkmoth).